The chain runs to 289 residues: F-box protein PP2-B15 (289 aa).

Positions 1 to 43 (MMLPEACVATILSFTTPADTISSAAVSSVFRVAGDSDFVWEKF) constitute an F-box domain.

The chain is F-box protein PP2-B15 (PP2B15) from Arabidopsis thaliana (Mouse-ear cress).